Consider the following 272-residue polypeptide: Probable proteasome subunit alpha type-6 (272 aa).

Positions Ala243 to Ala261 are enriched in low complexity. Residues Ala243–Asp272 form a disordered region.

Belongs to the peptidase T1A family. As to quaternary structure, the 26S proteasome consists of a 20S proteasome core and two 19S regulatory subunits. The 20S proteasome core is composed of 28 subunits that are arranged in four stacked rings, resulting in a barrel-shaped structure. The two end rings are each formed by seven alpha subunits, and the two central rings are each formed by seven beta subunits. The catalytic chamber with the active sites is on the inside of the barrel.

The protein resides in the cytoplasm. Its subcellular location is the nucleus. The proteasome is a multicatalytic proteinase complex which is characterized by its ability to cleave peptides with Arg, Phe, Tyr, Leu, and Glu adjacent to the leaving group at neutral or slightly basic pH. The proteasome has an ATP-dependent proteolytic activity. In Schizosaccharomyces pombe (strain 972 / ATCC 24843) (Fission yeast), this protein is Probable proteasome subunit alpha type-6.